Here is a 311-residue protein sequence, read N- to C-terminus: MTLLLLGAVLLVAQPQLVPSHPAAPGPGLKQQGLLRKVIILPEDTGEGAATNGSTQQLPQTIIIGVRKGGTRALLEMLSLHPDVAAAENEVHFFDWEEHYSQGLGWYLTQMPFSSPHQLTVEKTPAYFTSPKVPERIHSMNPTIRLLLILRDPSERVLSDYTQVLYNHLQKHKPYPPIEDLLMRDGRLNVDYKALNRSLYHAHMLNWLRFFPLGHIHIVDGDRFIRDPFPEIQKVERFLKLSPQINASNFYFNKTKGFYCLRDSGKDRCLHESKGRAHPQVDPKLLDKLHEYFREPNKKFFKLVGRTFDWH.

A signal peptide spans 1-20 (MTLLLLGAVLLVAQPQLVPS). Asn-52 carries an N-linked (GlcNAc...) asparagine glycan. 3'-phosphoadenylyl sulfate is bound by residues 68–72 (KGGTR), Arg-151, and Ser-159. Residues Asn-196, Asn-246, and Asn-253 are each glycosylated (N-linked (GlcNAc...) asparagine). Tyr-259 contributes to the 3'-phosphoadenylyl sulfate binding site. A disulfide bond links Cys-260 and Cys-269. 274–278 (KGRAH) lines the 3'-phosphoadenylyl sulfate pocket.

It belongs to the sulfotransferase 1 family.

It localises to the golgi apparatus lumen. It carries out the reaction alpha-D-glucosaminyl-[heparan sulfate](n) + 3'-phosphoadenylyl sulfate = 3-sulfo-alpha-D-glucosaminyl-[heparan sulfate](n) + adenosine 3',5'-bisphosphate + H(+). In terms of biological role, sulfotransferase that utilizes 3'-phospho-5'-adenylyl sulfate (PAPS) to catalyze the transfer of a sulfo group to position 3 of glucosamine residues in heparan. Catalyzes the rate limiting step in the biosynthesis of heparan sulfate (HSact). This modification is a crucial step in the biosynthesis of anticoagulant heparan sulfate as it completes the structure of the antithrombin pentasaccharide binding site. This Rattus norvegicus (Rat) protein is Heparan sulfate glucosamine 3-O-sulfotransferase 1 (Hs3st1).